Reading from the N-terminus, the 37-residue chain is Large ribosomal subunit protein bL36 (37 aa).

It belongs to the bacterial ribosomal protein bL36 family.

The sequence is that of Large ribosomal subunit protein bL36 from Streptomyces griseus subsp. griseus (strain JCM 4626 / CBS 651.72 / NBRC 13350 / KCC S-0626 / ISP 5235).